The sequence spans 716 residues: Protein C-mannosyl-transferase DPY19L3 (716 aa).

Residues 1-43 lie on the Cytoplasmic side of the membrane; that stretch reads MMSIRQRREIRATEVSEDFPAQEENVKLENKLPSGCTSRRLWK. The helical transmembrane segment at 44–64 threads the bilayer; sequence ILSLTIGGTIALCIGLLTSVY. Topologically, residues 65-154 are lumenal; it reads LATLHENDLW…RVLPVQKYLE (90 aa). Asn-118 carries N-linked (GlcNAc...) asparagine glycosylation. Residues 155-182 traverse the membrane as a helical segment; sequence PVYFYIYTLFGLQAIYVTALYITSWLLS. Topologically, residues 183–184 are cytoplasmic; the sequence is GT. The segment at residues 185 to 197 is an intramembrane region (name=3); it reads WLSGLLAAFWYVT. The Cytoplasmic portion of the chain corresponds to 198 to 215; sequence NRIDTTRVEFTIPLRENW. Residues 216 to 230 constitute an intramembrane region (name=4); sequence ALPFFAIQIAAITYF. Over 231–239 the chain is Cytoplasmic; that stretch reads LRPNLQPLS. Residues 240–256 traverse the membrane as a helical segment; sequence ERLTLLAIFISTFLFSL. Residues 257–262 are Lumenal-facing; sequence TWQFNQ. Residues 263-279 form a helical membrane-spanning segment; that stretch reads FMMLMQALVLFTLDSLD. The Cytoplasmic portion of the chain corresponds to 280-289; it reads MLPAVKATWL. Residues 290–306 form a helical membrane-spanning segment; that stretch reads YGIQITSLLLVCILQFF. At 307–308 the chain is on the lumenal side; sequence NS. The chain crosses the membrane as a helical span at residues 309–323; sequence MILGSLLISFNLSVF. Topologically, residues 324–338 are cytoplasmic; the sequence is IARKLQKNLKTGSFL. A helical transmembrane segment spans residues 339 to 359; sequence NRLGKLLLHLFMVLCLTLFLN. The Lumenal portion of the chain corresponds to 360-414; that stretch reads NIIKKILNLKSDEHIFKFLKAKFGLGATRDFDANLYLCEEAFGLLPFNTFGRLSD. A helical transmembrane segment spans residues 415-437; the sequence is TLLFYAYIFVLSITVIVAFVVAF. Residues 438 to 465 are Cytoplasmic-facing; the sequence is HNLSDSTNQQSVGKMEKGTVDLKPETAY. Residues 466-485 form a helical membrane-spanning segment; that stretch reads NLIHTILFGFLALSTMRMKY. The Lumenal segment spans residues 486 to 487; it reads LW. Residues 488–499 traverse the membrane as a helical segment; the sequence is TSHMCVFASFGL. The Cytoplasmic segment spans residues 500-522; the sequence is CSPEIWELLLKSVHLYNPKRICI. A helical membrane pass occupies residues 523–539; the sequence is MRYSVPILILLYLCYKF. Topologically, residues 540-716 are lumenal; that stretch reads WPGMMDELSE…FHVYKLSRNK (177 aa). A glycan (N-linked (GlcNAc...) asparagine) is linked at Asn-704.

It belongs to the dpy-19 family.

It is found in the endoplasmic reticulum membrane. The catalysed reaction is L-tryptophyl-[protein] + a di-trans,poly-cis-dolichyl beta-D-mannosyl phosphate = C-alpha-D-mannosyl-L-tryptophyl-[protein] + a di-trans,poly-cis-dolichyl phosphate + H(+). The protein operates within protein modification; protein glycosylation. C-mannosyltransferase that mediates C-mannosylation of tryptophan residues on target proteins. The reaction occurs on the luminal side of the endoplasmic reticulum and involves the transfer of a mannose unit from a dolichylphosphate mannose (Dol-P-Man) donor to an acceptor protein containing a WxxW or WxxC consensus sequence. C-mannosylates RSPO1, a Wnt signaling regulator, preferentially at the first Trp residue in the sequence WxxW. C-mannosylates the netrin receptor UNC5A, preferentially at the third tryptophan of WxxWxxWxxC sequence. The sequence is that of Protein C-mannosyl-transferase DPY19L3 (DPY19L3) from Pongo abelii (Sumatran orangutan).